We begin with the raw amino-acid sequence, 524 residues long: BEL1-like homeodomain protein 3 (524 aa).

The tract at residues 171–187 (SRYLKPTQQLLDEVVSV) is SR/KY domain. Basic and acidic residues-rich tracts occupy residues 195–205 (NKKMKNDKGQD) and 216–235 (EDDK…ELQS). The segment at 195 to 236 (NKKMKNDKGQDFHNGSSDNITEDDKSQSQELSPSERQELQSK) is disordered. The segment at 229–300 (ERQELQSKKS…CLRDAIKEQI (72 aa)) is BELL domain. The segment at residues 346–408 (AWRPQRGLPE…NARVRLWKPM (63 aa)) is a DNA-binding region (homeobox). Positions 429–463 (QDTKKMQETSQLKHEDSSSSQQQNQGNNNNNIPYT) are disordered. A compositionally biased stretch (basic and acidic residues) spans 430–445 (DTKKMQETSQLKHEDS). Low complexity predominate over residues 446-459 (SSSQQQNQGNNNNN).

Belongs to the TALE/BELL homeobox family. As to quaternary structure, may form heterodimeric complex with the TALE/KNOX protein STM. Interacts with OFP1, OFP2, OFP3, OFP4, OFP5 and OFP15.

The protein localises to the nucleus. Functionally, transcription factor that is responsive of the nuclear import of SHOOT MERISTEMLESS (STM). This is BEL1-like homeodomain protein 3 (BLH3) from Arabidopsis thaliana (Mouse-ear cress).